The following is a 470-amino-acid chain: Ribulose bisphosphate carboxylase large chain (470 aa).

Residues N115 and T165 each contribute to the substrate site. K167 (proton acceptor) is an active-site residue. Position 169 (K169) interacts with substrate. Mg(2+) contacts are provided by K193, D195, and E196. At K193 the chain carries N6-carboxylysine. Residue H286 is the Proton acceptor of the active site. Substrate contacts are provided by R287, H319, and S371.

It belongs to the RuBisCO large chain family. Type I subfamily. Heterohexadecamer of 8 large chains and 8 small chains. The cofactor is Mg(2+).

It is found in the carboxysome. It catalyses the reaction 2 (2R)-3-phosphoglycerate + 2 H(+) = D-ribulose 1,5-bisphosphate + CO2 + H2O. The catalysed reaction is D-ribulose 1,5-bisphosphate + O2 = 2-phosphoglycolate + (2R)-3-phosphoglycerate + 2 H(+). In terms of biological role, ruBisCO catalyzes two reactions: the carboxylation of D-ribulose 1,5-bisphosphate, the primary event in carbon dioxide fixation, as well as the oxidative fragmentation of the pentose substrate in the photorespiration process. Both reactions occur simultaneously and in competition at the same active site. The protein is Ribulose bisphosphate carboxylase large chain of Prochlorococcus marinus (strain SARG / CCMP1375 / SS120).